The following is a 152-amino-acid chain: Xanthine-guanine phosphoribosyltransferase (152 aa).

Residues 37–38 (RG), Arg-69, and 88–96 (DDLVDTGGT) each bind 5-phospho-alpha-D-ribose 1-diphosphate. Residue Arg-69 participates in GMP binding. Asp-89 provides a ligand contact to Mg(2+). Asp-92 and Ile-135 together coordinate guanine. Residues Asp-92 and Ile-135 each coordinate xanthine. GMP contacts are provided by residues 92–96 (DTGGT) and 134–135 (WI).

The protein belongs to the purine/pyrimidine phosphoribosyltransferase family. XGPT subfamily. In terms of assembly, homotetramer. It depends on Mg(2+) as a cofactor.

Its subcellular location is the cell inner membrane. It catalyses the reaction GMP + diphosphate = guanine + 5-phospho-alpha-D-ribose 1-diphosphate. The catalysed reaction is XMP + diphosphate = xanthine + 5-phospho-alpha-D-ribose 1-diphosphate. The enzyme catalyses IMP + diphosphate = hypoxanthine + 5-phospho-alpha-D-ribose 1-diphosphate. The protein operates within purine metabolism; GMP biosynthesis via salvage pathway; GMP from guanine: step 1/1. Its pathway is purine metabolism; XMP biosynthesis via salvage pathway; XMP from xanthine: step 1/1. Its function is as follows. Purine salvage pathway enzyme that catalyzes the transfer of the ribosyl-5-phosphate group from 5-phospho-alpha-D-ribose 1-diphosphate (PRPP) to the N9 position of the 6-oxopurines guanine and xanthine to form the corresponding ribonucleotides GMP (guanosine 5'-monophosphate) and XMP (xanthosine 5'-monophosphate), with the release of PPi. To a lesser extent, also acts on hypoxanthine. This is Xanthine-guanine phosphoribosyltransferase from Pectobacterium atrosepticum (strain SCRI 1043 / ATCC BAA-672) (Erwinia carotovora subsp. atroseptica).